Reading from the N-terminus, the 283-residue chain is Phosphatidylserine decarboxylase proenzyme (283 aa).

Catalysis depends on charge relay system; for autoendoproteolytic cleavage activity residues Asp90, His143, and Ser248. Catalysis depends on Ser248, which acts as the Schiff-base intermediate with substrate; via pyruvic acid; for decarboxylase activity. At Ser248 the chain carries Pyruvic acid (Ser); by autocatalysis.

This sequence belongs to the phosphatidylserine decarboxylase family. PSD-B subfamily. Prokaryotic type I sub-subfamily. As to quaternary structure, heterodimer of a large membrane-associated beta subunit and a small pyruvoyl-containing alpha subunit. Requires pyruvate as cofactor. Is synthesized initially as an inactive proenzyme. Formation of the active enzyme involves a self-maturation process in which the active site pyruvoyl group is generated from an internal serine residue via an autocatalytic post-translational modification. Two non-identical subunits are generated from the proenzyme in this reaction, and the pyruvate is formed at the N-terminus of the alpha chain, which is derived from the carboxyl end of the proenzyme. The autoendoproteolytic cleavage occurs by a canonical serine protease mechanism, in which the side chain hydroxyl group of the serine supplies its oxygen atom to form the C-terminus of the beta chain, while the remainder of the serine residue undergoes an oxidative deamination to produce ammonia and the pyruvoyl prosthetic group on the alpha chain. During this reaction, the Ser that is part of the protease active site of the proenzyme becomes the pyruvoyl prosthetic group, which constitutes an essential element of the active site of the mature decarboxylase.

Its subcellular location is the cell membrane. The catalysed reaction is a 1,2-diacyl-sn-glycero-3-phospho-L-serine + H(+) = a 1,2-diacyl-sn-glycero-3-phosphoethanolamine + CO2. It functions in the pathway phospholipid metabolism; phosphatidylethanolamine biosynthesis; phosphatidylethanolamine from CDP-diacylglycerol: step 2/2. In terms of biological role, catalyzes the formation of phosphatidylethanolamine (PtdEtn) from phosphatidylserine (PtdSer). This is Phosphatidylserine decarboxylase proenzyme from Francisella tularensis subsp. mediasiatica (strain FSC147).